A 149-amino-acid chain; its full sequence is Probable ubiquitin-conjugating enzyme E2 12 (149 aa).

Positions 1 to 15 are enriched in basic and acidic residues; the sequence is MASKRISRELRDMQR. Residues 1–22 form a disordered region; it reads MASKRISRELRDMQRHPPANCS. The UBC core domain occupies 1–148; that stretch reads MASKRISREL…AQKWTQKYAM (148 aa). The Glycyl thioester intermediate role is filled by Cys86.

The protein belongs to the ubiquitin-conjugating enzyme family. Ubiquitously expressed at very low levels.

It catalyses the reaction S-ubiquitinyl-[E1 ubiquitin-activating enzyme]-L-cysteine + [E2 ubiquitin-conjugating enzyme]-L-cysteine = [E1 ubiquitin-activating enzyme]-L-cysteine + S-ubiquitinyl-[E2 ubiquitin-conjugating enzyme]-L-cysteine.. Its pathway is protein modification; protein ubiquitination. In terms of biological role, accepts the ubiquitin from the E1 complex and catalyzes its covalent attachment to other proteins. The chain is Probable ubiquitin-conjugating enzyme E2 12 (UBC12) from Arabidopsis thaliana (Mouse-ear cress).